Reading from the N-terminus, the 352-residue chain is Ion-translocating oxidoreductase complex subunit D (352 aa).

The next 4 helical transmembrane spans lie at 20–40 (IMLLVLLAAVPGIAAQLWFFG), 42–62 (GTLVQILLASVSALLAEALVL), 89–109 (IPPLAPWWMVVLGTVFAVIIA), and 123–143 (PAMIGYVVLLISFPVQMTSWL). Threonine 187 is subject to FMN phosphoryl threonine. 5 helical membrane-spanning segments follow: residues 214 to 234 (ILAGAGWQWVNLAWLAGGVWL), 242 to 262 (WHVPLSFLVTLALCATLGWLF), 267 to 287 (LAAPQIHLLSGATMLGAFFIL), 301 to 321 (LIFGALAGLLVWMIRSFGGYP), and 322 to 342 (DGVAFAVLLANITVPLIDYYT).

Belongs to the NqrB/RnfD family. In terms of assembly, the complex is composed of six subunits: RsxA, RsxB, RsxC, RsxD, RsxE and RsxG. The cofactor is FMN.

The protein localises to the cell inner membrane. Its function is as follows. Part of a membrane-bound complex that couples electron transfer with translocation of ions across the membrane. Required to maintain the reduced state of SoxR. This Escherichia coli (strain UTI89 / UPEC) protein is Ion-translocating oxidoreductase complex subunit D.